The primary structure comprises 128 residues: Large ribosomal subunit protein bL17 (128 aa).

Belongs to the bacterial ribosomal protein bL17 family. As to quaternary structure, part of the 50S ribosomal subunit. Contacts protein L32.

This chain is Large ribosomal subunit protein bL17, found in Streptococcus pyogenes serotype M49 (strain NZ131).